Reading from the N-terminus, the 144-residue chain is Large ribosomal subunit protein uL13 (144 aa).

This sequence belongs to the universal ribosomal protein uL13 family. As to quaternary structure, part of the 50S ribosomal subunit.

Functionally, this protein is one of the early assembly proteins of the 50S ribosomal subunit, although it is not seen to bind rRNA by itself. It is important during the early stages of 50S assembly. The sequence is that of Large ribosomal subunit protein uL13 from Clostridium perfringens (strain ATCC 13124 / DSM 756 / JCM 1290 / NCIMB 6125 / NCTC 8237 / Type A).